The primary structure comprises 138 residues: MAKYNIGAVVAEFNYDITQMMLGLAKEEAKSRDCEITQVVTVPGVFDMALAIKKLLEKDEIDAVITLGAVIEGATDHDQIVAQHASRKIADLSLEYEKPVALGISGPGMTRLDAHKRVDYGKRAVEAAIKMCDRLNEI.

Residues phenylalanine 13, 45–47 (VFD), and 69–71 (AVI) contribute to the 5-amino-6-(D-ribitylamino)uracil site. Position 74–75 (74–75 (AT)) interacts with (2S)-2-hydroxy-3-oxobutyl phosphate. Histidine 77 functions as the Proton donor in the catalytic mechanism. Leucine 102 is a 5-amino-6-(D-ribitylamino)uracil binding site. Arginine 117 contacts (2S)-2-hydroxy-3-oxobutyl phosphate.

The protein belongs to the DMRL synthase family.

It catalyses the reaction (2S)-2-hydroxy-3-oxobutyl phosphate + 5-amino-6-(D-ribitylamino)uracil = 6,7-dimethyl-8-(1-D-ribityl)lumazine + phosphate + 2 H2O + H(+). The protein operates within cofactor biosynthesis; riboflavin biosynthesis; riboflavin from 2-hydroxy-3-oxobutyl phosphate and 5-amino-6-(D-ribitylamino)uracil: step 1/2. In terms of biological role, catalyzes the formation of 6,7-dimethyl-8-ribityllumazine by condensation of 5-amino-6-(D-ribitylamino)uracil with 3,4-dihydroxy-2-butanone 4-phosphate. This is the penultimate step in the biosynthesis of riboflavin. The chain is 6,7-dimethyl-8-ribityllumazine synthase from Methanobrevibacter smithii (strain ATCC 35061 / DSM 861 / OCM 144 / PS).